The chain runs to 397 residues: Ribosomal RNA large subunit methyltransferase I (397 aa).

The 79-residue stretch at 2–80 (AIRIKLKPGR…KEETIDADFF (79 aa)) folds into the PUA domain.

This sequence belongs to the methyltransferase superfamily. RlmI family.

Its subcellular location is the cytoplasm. It catalyses the reaction cytidine(1962) in 23S rRNA + S-adenosyl-L-methionine = 5-methylcytidine(1962) in 23S rRNA + S-adenosyl-L-homocysteine + H(+). Its function is as follows. Specifically methylates the cytosine at position 1962 (m5C1962) of 23S rRNA. The chain is Ribosomal RNA large subunit methyltransferase I from Shewanella frigidimarina (strain NCIMB 400).